We begin with the raw amino-acid sequence, 75 residues long: Phytosulfokines (75 aa).

Positions 1-22 (MSSKAITLLLIALLFSLSLAQA) are cleaved as a signal peptide. Positions 23–66 (ARPLQPADSTKSVHVIPEKVHDEACEGVGEEECLMRRTLTAHVD) are excised as a propeptide. Sulfotyrosine is present on residues Tyr-67 and Tyr-69. Residues 72 to 75 (DHNP) constitute a propeptide that is removed on maturation.

This sequence belongs to the phytosulfokine family. Sulfation is important for activity and for the binding to a putative membrane receptor. Deletion of the sulfate groups of Tyr-67 and Tyr-69 resulted in compounds with respectively 0.6% and 4% of the activity. In terms of processing, PSK-alpha is produced by endopeptidase digestion. PSK-beta is produced from PSK-alpha by exopeptidase digestion.

It is found in the secreted. In terms of biological role, promotes plant cell differentiation, organogenesis and somatic embryogenesis as well as cell proliferation. This is Phytosulfokines (PSK) from Asparagus officinalis (Garden asparagus).